The sequence spans 155 residues: Small ribosomal subunit protein uS7c (155 aa).

It belongs to the universal ribosomal protein uS7 family. Part of the 30S ribosomal subunit.

It is found in the plastid. The protein resides in the chloroplast. One of the primary rRNA binding proteins, it binds directly to 16S rRNA where it nucleates assembly of the head domain of the 30S subunit. The polypeptide is Small ribosomal subunit protein uS7c (rps7) (Chaetosphaeridium globosum (Charophycean green alga)).